A 300-amino-acid polypeptide reads, in one-letter code: 2-oxoglutarate-dependent dioxygenase DAO (300 aa).

The 104-residue stretch at tryptophan 149–proline 252 folds into the Fe2OG dioxygenase domain. Histidine 173, aspartate 175, and histidine 232 together coordinate Fe cation. Arginine 242 is a 2-oxoglutarate binding site.

Belongs to the iron/ascorbate-dependent oxidoreductase family. It depends on Fe(2+) as a cofactor.

2-oxoglutarate-dependent dioxygenase essential for auxin catabolism and maintenance of auxin homeostasis in reproductive organs. Catalyzes the irreversible oxidation of indole-3-acetic acid (IAA) to the biologically inactive 2-oxoindole-3-acetic acid (OxIAA). This is 2-oxoglutarate-dependent dioxygenase DAO (DAO) from Oryza sativa subsp. indica (Rice).